The following is a 956-amino-acid chain: MEEFVIPVFSETEIPYSLLSHYPLAVRTNVKIANVDEGHDVVKIPESDMIDVPRVSIVEALAAKPTRNDGIVVPRLLDITLRAYDDRKAMKSARGVEFMTNAKWMKWAIDDRMDIQPLKVAIDDHNAVNHQLFNCIVKARPANADTVYYSYFPLRDKVKKCNHTNLDLLRGLTTTEMFHMLQGAAYCLKSSYELITNSERNNTEETYAPGVHNRIRLVRGTRIGYKGEAYSRFVSSLVQVRIQGQTPPEIVDDIARLNEIRTEWINAQFDSTKIRALELCKILSAIGRKMLNTHEEPKDEMDLSTRFQFKLDDKFKKTDSEHINIFNVGAPATHEGRFYALIAIAATDTQRGRVWRTNPYPCLRGALIAAECQLGDVYHTLRQVYKWSLRQDYGRTEVPLENNKYVFSRINLFDSNLEVGDQVVHWKYEIDGPAETTYDNGYICKTEREDGELVCKISEEKYKTMLDRMIQGGWDQERFKLYSVLTDPNLLTIDFEKDAYLNIRSEFVLPSYFDQWIYSPMFNARLRITHGEIGTRKSADPWNKRVVFGYVKASTESPEYALGQYFDTRIQLYGDALSLKQSQSAVFQHQSQQEDFPVLTSYAKGDVVCPHSGGALYTFRKVALMLMANYERLSPDLHEGMEDHTYTHPSIGGANQKRILEMRDFSQLICFIIDYIFERHDQLRDMREARRILYLVQSLGEPQRLDVLSVASPNFSRYFLKLKDVQRISDLNVINFLPLLFLIQDNISYWHRQWAVPMILYDDTIKLIPVEVGAYANRFGIKSFFNFTRFHPGDAKKRQKADDTHKEFGLISFNYYANTKIAQGGVHTPVVTTKLDTLKIHLSSLCAGLADSVVYTLPVAHPKKCIVLIIVGDDKLEPHVRSEQVVSKYYFSRKHVSGVVSICIGQNDQLKVYSSGIVRHRICEKFILRYKCKVVLVKMPGYVFGNDELMTKLLNV.

This sequence belongs to the orbivirus VP2 family.

It is found in the virion. The VP2 protein is one of the two proteins (with VP5) which constitute the virus particle outer capsid. It is the major target of the host immunogenic response. Responsible for viral attachment to target host cell, probably by binding to sialic acid. This attachment induces virion internalization predominantly through clathrin-dependent endocytosis. The polypeptide is Outer capsid protein VP2 (Segment-2) (Bluetongue virus 11 (isolate USA) (BTV 11)).